The primary structure comprises 371 residues: MGYAKSAMLIFLLALVIASCATAMDMSVVSSNDNHHVTAGPGRRQGIFDAEATLMFESWMVKHGKVYDSVAEKERRLTIFEDNLRFITNRNAENLSYRLGLNRFADLSLHEYGEICHGADPRPPRNHVFMTSSNRYKTSDGDVLPKSVDWRNEGAVTEVKDQGLCRSCWAFSTVGAVEGLNKIVTGELVTLSEQDLINCNKENNGCGGGKVETAYEFIMNNGGLGTDNDYPYKALNGVCEGRLKEDNKNVMIDGYENLPANDEAALMKAVAHQPVTAVVDSSSREFQLYESGVFDGTCGTNLNHGVVVVGYGTENGRDYWIVKNSRGDTWGEAGYMKMARNIANPRGLCGIAMRASYPLKNSFSTDKVSVA.

The first 23 residues, 1 to 23, serve as a signal peptide directing secretion; that stretch reads MGYAKSAMLIFLLALVIASCATA. The propeptide at 24–143 is activation peptide; the sequence is MDMSVVSSND…NRYKTSDGDV (120 aa). N-linked (GlcNAc...) asparagine glycosylation is present at N94. Disulfide bonds link C165-C206, C199-C239, and C298-C349. The active site involves C168. Residues H304 and N324 contribute to the active site.

This sequence belongs to the peptidase C1 family. Expressed in roots, inflorescences and siliques.

Its function is as follows. Possesses protease activity in vitro. This chain is Probable cysteine protease RDL5, found in Arabidopsis thaliana (Mouse-ear cress).